The following is a 450-amino-acid chain: Cysteine protease ATG4C (450 aa).

C112 serves as the catalytic Nucleophile. Active-site residues include D336 and H338.

Belongs to the peptidase C54 family.

The protein resides in the cytoplasm. The enzyme catalyses [protein]-C-terminal L-amino acid-glycyl-phosphatidylethanolamide + H2O = [protein]-C-terminal L-amino acid-glycine + a 1,2-diacyl-sn-glycero-3-phosphoethanolamine. Cysteine protease that plays a key role in autophagy by mediating both proteolytic activation and delipidation of ATG8 family proteins. The protease activity is required for proteolytic activation of ATG8 family proteins: cleaves the C-terminal amino acid of ATG8 proteins to reveal a C-terminal glycine. Exposure of the glycine at the C-terminus is essential for ATG8 proteins conjugation to phosphatidylethanolamine (PE) and insertion to membranes, which is necessary for autophagy. In addition to the protease activity, also mediates delipidation of ATG8 family proteins. Catalyzes delipidation of PE-conjugated forms of ATG8 proteins during macroautophagy. This chain is Cysteine protease ATG4C, found in Xenopus laevis (African clawed frog).